Consider the following 131-residue polypeptide: Large ribosomal subunit protein bL17 (131 aa).

Belongs to the bacterial ribosomal protein bL17 family. Part of the 50S ribosomal subunit. Contacts protein L32.

The chain is Large ribosomal subunit protein bL17 from Methylobacillus flagellatus (strain ATCC 51484 / DSM 6875 / VKM B-1610 / KT).